We begin with the raw amino-acid sequence, 332 residues long: MFNAVKADMPDDPMLARRYGQCLELALEACQDTPEQFKLVETPLKSFLLVSNILPQDNRPWHEARSSGRVAEDDYDFSSLALELLPLNPRLPEEWQFGGQGWSSRMEPSQPEMGMGLCFEVFDGDLMRIALAWNKDEVIGQALQILAHSQTWTSLVPEDPLPWMWALFYGPRSHCEERHCVYAAARGKRGPILLPTAVYTPCANIEAFLAHLTRCVYALYLDVRDWKGEDIAPPFDVSRLNKMAKQLCLLPQEPFCITRVCLLCLLHKQNLNAQYKRPVDTYDPCLILTGEAERYMVDAVGNYREASTGTTVLYPTYDLGSIVADMVTYEDE.

Position 42 is a phosphothreonine (Thr-42).

The protein belongs to the herpesviridae UL95 family. Part of a trimeric complex composed of BGLF3, BFRF2 and BVLF1. Phosphorylation on threonine is necessary for the formation of the trimeric complex, for the expression of vPIC-dependent late genes and production of new virus particles.

Part of the viral pre-initiation complex (vPIC) that is responsible for the expression of vPIC-dependent late genes. vPIC is composed of at least BcRF1 that binds the viral TATT box, BDLF3.5, BDLF4, BFRF2, BGLF3, BGLF4 and BVLF1. This chain is Late gene expression regulator BGLF3, found in Epstein-Barr virus (strain B95-8) (HHV-4).